The sequence spans 569 residues: Sulfite reductase [NADPH] hemoprotein beta-component (569 aa).

The [4Fe-4S] cluster site is built by C434, C440, C479, and C483. C483 provides a ligand contact to siroheme.

The protein belongs to the nitrite and sulfite reductase 4Fe-4S domain family. As to quaternary structure, alpha(8)-beta(8). The alpha component is a flavoprotein, the beta component is a hemoprotein. Requires siroheme as cofactor. [4Fe-4S] cluster is required as a cofactor.

The catalysed reaction is hydrogen sulfide + 3 NADP(+) + 3 H2O = sulfite + 3 NADPH + 4 H(+). It functions in the pathway sulfur metabolism; hydrogen sulfide biosynthesis; hydrogen sulfide from sulfite (NADPH route): step 1/1. In terms of biological role, component of the sulfite reductase complex that catalyzes the 6-electron reduction of sulfite to sulfide. This is one of several activities required for the biosynthesis of L-cysteine from sulfate. This Staphylococcus carnosus (strain TM300) protein is Sulfite reductase [NADPH] hemoprotein beta-component.